A 479-amino-acid chain; its full sequence is Ribulose bisphosphate carboxylase large chain (479 aa).

Residues 1-2 constitute a propeptide that is removed on maturation; that stretch reads MS. Asn123 and Thr173 together coordinate substrate. The active-site Proton acceptor is Lys175. Lys177 contributes to the substrate binding site. Residues Lys201, Asp203, and Glu204 each coordinate Mg(2+). The residue at position 201 (Lys201) is an N6-carboxylysine. The residue at position 208 (Ser208) is a Phosphoserine. His294 serves as the catalytic Proton acceptor. Substrate-binding residues include Arg295 and His327. A Phosphothreonine modification is found at Thr330. Ser379 lines the substrate pocket.

This sequence belongs to the RuBisCO large chain family. Type I subfamily. As to quaternary structure, heterohexadecamer of 8 large chains and 8 small chains; disulfide-linked. The disulfide link is formed within the large subunit homodimers. Mg(2+) is required as a cofactor. Post-translationally, the disulfide bond which can form in the large chain dimeric partners within the hexadecamer appears to be associated with oxidative stress and protein turnover.

The protein resides in the plastid. The protein localises to the chloroplast. It catalyses the reaction 2 (2R)-3-phosphoglycerate + 2 H(+) = D-ribulose 1,5-bisphosphate + CO2 + H2O. The catalysed reaction is D-ribulose 1,5-bisphosphate + O2 = 2-phosphoglycolate + (2R)-3-phosphoglycerate + 2 H(+). In terms of biological role, ruBisCO catalyzes two reactions: the carboxylation of D-ribulose 1,5-bisphosphate, the primary event in carbon dioxide fixation, as well as the oxidative fragmentation of the pentose substrate in the photorespiration process. Both reactions occur simultaneously and in competition at the same active site. The protein is Ribulose bisphosphate carboxylase large chain of Draba nemorosa (Woodland whitlowgrass).